The sequence spans 436 residues: Enolase (436 aa).

Residue Q167 participates in (2R)-2-phosphoglycerate binding. Residue E209 is the Proton donor of the active site. Residues D246, E291, and D318 each coordinate Mg(2+). Positions 343, 372, 373, and 394 each coordinate (2R)-2-phosphoglycerate. The Proton acceptor role is filled by K343.

It belongs to the enolase family. Component of the RNA degradosome, a multiprotein complex involved in RNA processing and mRNA degradation. Mg(2+) serves as cofactor.

The protein localises to the cytoplasm. It is found in the secreted. It localises to the cell surface. It catalyses the reaction (2R)-2-phosphoglycerate = phosphoenolpyruvate + H2O. The protein operates within carbohydrate degradation; glycolysis; pyruvate from D-glyceraldehyde 3-phosphate: step 4/5. Catalyzes the reversible conversion of 2-phosphoglycerate (2-PG) into phosphoenolpyruvate (PEP). It is essential for the degradation of carbohydrates via glycolysis. The chain is Enolase from Actinobacillus pleuropneumoniae serotype 5b (strain L20).